The following is a 246-amino-acid chain: Putative carboxymethylenebutenolidase (246 aa).

Active-site residues include cysteine 127, aspartate 183, and histidine 215.

This sequence belongs to the dienelactone hydrolase family.

It carries out the reaction 2-(5-oxo-2,5-dihydrofuran-2-ylidene)acetate + H2O = 4-oxohex-2-enedioate + H(+). The protein is Putative carboxymethylenebutenolidase of Synechocystis sp. (strain ATCC 27184 / PCC 6803 / Kazusa).